Consider the following 162-residue polypeptide: RNA pyrophosphohydrolase (162 aa).

Residues 7–149 (KYRPCVGIML…KKEVYKTVIE (143 aa)) form the Nudix hydrolase domain. Residues 40–61 (GGVDDGEELEQAALRELLEEVG) carry the Nudix box motif.

It belongs to the Nudix hydrolase family. RppH subfamily. It depends on a divalent metal cation as a cofactor.

Accelerates the degradation of transcripts by removing pyrophosphate from the 5'-end of triphosphorylated RNA, leading to a more labile monophosphorylated state that can stimulate subsequent ribonuclease cleavage. The sequence is that of RNA pyrophosphohydrolase from Wolbachia sp. subsp. Drosophila simulans (strain wRi).